The primary structure comprises 1537 residues: Flocculation protein FLO1 (1537 aa).

An N-terminal signal peptide occupies residues 1 to 24 (MTMPHRYMFLAVFTLLALTSVASG). The PA14 domain occupies 74-249 (GGQTDISIDY…GTTVSDDFEG (176 aa)). 2 N-linked (GlcNAc...) asparagine glycosylation sites follow: Asn-135 and Asn-187. Residues 197 to 240 (GGSLPPNIEGTVYMYAGYYYPMKVVYSNAVSWGTLPISVTLPDG) are sugar recognition. Asn-262 carries an N-linked (GlcNAc...) asparagine glycan. Tandem repeats lie at residues 278-322 (TTTE…STII), 323-367 (TTTE…TTAI), 368-412 (TTTE…TTAM), 413-457 (TTTQ…TTAM), 458-502 (TTTQ…TTAM), 503-547 (TTTQ…TTAM), 548-592 (TTPQ…TTAI), 593-637 (TTTE…TTAI), 638-682 (TTTQ…TTAM), 683-727 (TTTQ…TTAM), 728-772 (TTTQ…GLIS), 773-817 (TTTE…GLVT), 818-862 (TTTE…GLIS), 863-907 (TTTE…GLIS), 908-952 (TTTE…GLIS), 953-997 (TTTE…GLIS), 998-1042 (TTTE…GLVT), and 1043-1087 (TTTE…ISSS). Positions 278–1087 (TTTEPWTGTF…KTPTTAISSS (810 aa)) are 18 X 45 AA approximate tandem repeats, Thr-rich. Asn-329, Asn-374, Asn-419, Asn-464, Asn-509, Asn-554, Asn-599, Asn-644, Asn-689, and Asn-734 each carry an N-linked (GlcNAc...) asparagine glycan. Disordered stretches follow at residues 770-799 (LIST…NGQP) and 860-889 (LIST…NGQP). Over residues 773–795 (TTTEPWTGTFTSTSTEMTTVTGT) the composition is skewed to low complexity. The segment covering 863–885 (TTTEPWTGTFTSTSTEMTTITGT) has biased composition (low complexity). A disordered region spans residues 995 to 1024 (LISTTTEPWTGTFTSTSTEMTTVTGTNGQP). The span at 998–1020 (TTTEPWTGTFTSTSTEMTTVTGT) shows a compositional bias: low complexity. N-linked (GlcNAc...) asparagine glycosylation is present at Asn-1114. Tandem repeats lie at residues 1118–1137 (VISS…TSSP) and 1138–1157 (VISS…IFSE). Residues 1118–1157 (VISSSVISSSVTSSLFTSSPVISSSVISSSTTTSTSIFSE) form a 2 X 20 AA approximate tandem repeats, Ser/Thr-rich region. Residues 1161–1220 (SSVIPTSSSTSGSSESETSSAGSVSSSSFISSESSKSPTYSSSSLPLVTSATTSQETASS) are compositionally biased toward low complexity. The disordered stretch occupies residues 1161–1232 (SSVIPTSSST…PATTTKTSEQ (72 aa)). Polar residues predominate over residues 1222 to 1232 (PPATTTKTSEQ). 6 consecutive repeat copies span residues 1226–1276 (TTKT…CPIS), 1291–1341 (TTET…CPIS), 1342–1392 (TTES…RPQT), 1408–1416 (ETTTNTLAA), 1417–1425 (ETTTNTVAA), and 1426–1434 (ETITNTGAA). The 3 X 51 AA approximate repeats, Ser/Thr-rich stretch occupies residues 1226–1392 (TTKTSEQTTL…TVYPTWRPQT (167 aa)). A compositionally biased stretch (polar residues) spans 1392–1404 (TANEESVSSKMNS). The interval 1392–1414 (TANEESVSSKMNSATGETTTNTL) is disordered. Over residues 1405–1414 (ATGETTTNTL) the composition is skewed to low complexity. A 3 X 9 AA approximate tandem repeats, Thr-rich region spans residues 1408–1434 (ETTTNTLAAETTTNTVAAETITNTGAA). A disordered region spans residues 1468 to 1497 (VSVSETGNTKSLTSSGLSTMSQQPRSTPAS). Residues 1472 to 1497 (ETGNTKSLTSSGLSTMSQQPRSTPAS) are compositionally biased toward polar residues. Gly-1514 carries GPI-anchor amidated glycine lipidation. Positions 1515–1537 (SANSLLAGSGLSVFIASLLLAII) are cleaved as a propeptide — removed in mature form.

It belongs to the flocculin family. In terms of processing, extensively N- and O-glycosylated. The GPI-anchor is attached to the protein in the endoplasmic reticulum and serves to target the protein to the cell surface. There, the glucosamine-inositol phospholipid moiety is cleaved off and the GPI-modified mannoprotein is covalently attached via its lipidless GPI glycan remnant to the 1,6-beta-glucan of the outer cell wall layer.

The protein resides in the cell membrane. The protein localises to the secreted. It localises to the cell wall. Its function is as follows. Cell wall protein that participates directly in adhesive cell-cell interactions during yeast flocculation, a reversible, asexual and Ca(2+)-dependent process in which cells adhere to form aggregates (flocs) consisting of thousands of cells. The lectin-like protein sticks out of the cell wall of flocculent cells and selectively binds mannose residues in the cell walls of adjacent cells. Activity is inhibited by mannose, but not by glucose, maltose, sucrose or galactose. Also involved in cell-substrate adhesion. This chain is Flocculation protein FLO1 (FLO1), found in Saccharomyces cerevisiae (strain ATCC 204508 / S288c) (Baker's yeast).